The primary structure comprises 438 residues: Putative cytochrome P450 140 (438 aa).

C381 contributes to the heme binding site.

It belongs to the cytochrome P450 family. Requires heme as cofactor.

This is Putative cytochrome P450 140 (cyp140) from Mycobacterium bovis (strain ATCC BAA-935 / AF2122/97).